The following is a 130-amino-acid chain: UPF0102 protein RPE_0358 (130 aa).

Belongs to the UPF0102 family.

The sequence is that of UPF0102 protein RPE_0358 from Rhodopseudomonas palustris (strain BisA53).